The following is a 59-amino-acid chain: Inner kinetochore subunit fta6 (59 aa).

As to quaternary structure, component of the inner kinetochore constitutive centromere-associated network (CCAN) (also known as central kinetochore Sim4 complex in fission yeast), which is composed of at least cnl2, cnp3, cnp20, fta1, fta2, fta3, fta4, fta6, fta7, mal2, mhf1, mhf2, mis6, mis15, mis17, sim4 and wip1.

It localises to the nucleus. Its subcellular location is the chromosome. The protein resides in the centromere. It is found in the kinetochore. The protein localises to the cytoplasm. It localises to the cytoskeleton. Its subcellular location is the microtubule organizing center. The protein resides in the spindle pole body. Functionally, component of the kinetochore, a multiprotein complex that assembles on centromeric DNA and attaches chromosomes to spindle microtubules, mediating chromosome segregation and sister chromatid segregation during meiosis and mitosis. Component of the inner kinetochore constitutive centromere-associated network (CCAN), which serves as a structural platform for outer kinetochore assembly. This Schizosaccharomyces pombe (strain 972 / ATCC 24843) (Fission yeast) protein is Inner kinetochore subunit fta6 (fta6).